The following is a 469-amino-acid chain: Ribulose bisphosphate carboxylase large chain (469 aa).

Positions 1–2 are excised as a propeptide; the sequence is MS. Residue Pro-3 is modified to N-acetylproline. At Lys-14 the chain carries N6,N6,N6-trimethyllysine. Positions 123 and 173 each coordinate substrate. Lys-175 acts as the Proton acceptor in catalysis. Position 177 (Lys-177) interacts with substrate. Residues Lys-201, Asp-203, and Glu-204 each coordinate Mg(2+). Residue Lys-201 is modified to N6-carboxylysine. His-294 (proton acceptor) is an active-site residue. Substrate is bound by residues Arg-295, His-327, and Ser-379.

Belongs to the RuBisCO large chain family. Type I subfamily. Heterohexadecamer of 8 large chains and 8 small chains; disulfide-linked. The disulfide link is formed within the large subunit homodimers. It depends on Mg(2+) as a cofactor. Post-translationally, the disulfide bond which can form in the large chain dimeric partners within the hexadecamer appears to be associated with oxidative stress and protein turnover.

It localises to the plastid. Its subcellular location is the chloroplast. It catalyses the reaction 2 (2R)-3-phosphoglycerate + 2 H(+) = D-ribulose 1,5-bisphosphate + CO2 + H2O. The enzyme catalyses D-ribulose 1,5-bisphosphate + O2 = 2-phosphoglycolate + (2R)-3-phosphoglycerate + 2 H(+). RuBisCO catalyzes two reactions: the carboxylation of D-ribulose 1,5-bisphosphate, the primary event in carbon dioxide fixation, as well as the oxidative fragmentation of the pentose substrate in the photorespiration process. Both reactions occur simultaneously and in competition at the same active site. The protein is Ribulose bisphosphate carboxylase large chain of Atriplex patula (Common orache).